The chain runs to 140 residues: Large ribosomal subunit protein bL34m (140 aa).

It belongs to the bacterial ribosomal protein bL34 family. As to quaternary structure, component of the mitochondrial large ribosomal subunit (mt-LSU). Mature N.crassa 74S mitochondrial ribosomes consist of a small (37S) and a large (54S) subunit. The 37S small subunit contains a 16S ribosomal RNA (16S mt-rRNA) and 32 different proteins. The 54S large subunit contains a 23S rRNA (23S mt-rRNA) and 42 different proteins.

It is found in the mitochondrion. Component of the mitochondrial ribosome (mitoribosome), a dedicated translation machinery responsible for the synthesis of mitochondrial genome-encoded proteins, including at least some of the essential transmembrane subunits of the mitochondrial respiratory chain. The mitoribosomes are attached to the mitochondrial inner membrane and translation products are cotranslationally integrated into the membrane. The chain is Large ribosomal subunit protein bL34m (mrpl34) from Neurospora crassa (strain ATCC 24698 / 74-OR23-1A / CBS 708.71 / DSM 1257 / FGSC 987).